The sequence spans 101 residues: Large ribosomal subunit protein eL30 (101 aa).

The protein belongs to the eukaryotic ribosomal protein eL30 family.

This is Large ribosomal subunit protein eL30 from Pyrobaculum calidifontis (strain DSM 21063 / JCM 11548 / VA1).